A 465-amino-acid chain; its full sequence is Putrescine aminotransferase (465 aa).

Pyridoxal 5'-phosphate is bound by residues 150–151 (GT) and Gln-274. Position 300 is an N6-(pyridoxal phosphate)lysine (Lys-300). Thr-332 is a binding site for pyridoxal 5'-phosphate.

This sequence belongs to the class-III pyridoxal-phosphate-dependent aminotransferase family. Putrescine aminotransferase subfamily. Pyridoxal 5'-phosphate serves as cofactor.

It carries out the reaction an alkane-alpha,omega-diamine + 2-oxoglutarate = an omega-aminoaldehyde + L-glutamate. It catalyses the reaction putrescine + 2-oxoglutarate = 1-pyrroline + L-glutamate + H2O. The enzyme catalyses cadaverine + 2-oxoglutarate = 5-aminopentanal + L-glutamate. It participates in amine and polyamine degradation; putrescine degradation; 4-aminobutanal from putrescine (transaminase route): step 1/1. Functionally, catalyzes the aminotransferase reaction from putrescine to 2-oxoglutarate, leading to glutamate and 4-aminobutanal, which spontaneously cyclizes to form 1-pyrroline. This is the first step in one of two pathways for putrescine degradation, where putrescine is converted into 4-aminobutanoate (gamma-aminobutyrate or GABA) via 4-aminobutanal. Also functions as a cadaverine transaminase in a a L-lysine degradation pathway to succinate that proceeds via cadaverine, glutarate and L-2-hydroxyglutarate. In Cronobacter sakazakii (strain ATCC BAA-894) (Enterobacter sakazakii), this protein is Putrescine aminotransferase.